Consider the following 455-residue polypeptide: Bifunctional protein GlmU (455 aa).

Residues 1-226 (MSLEIVILAA…AMEVQGANDR (226 aa)) form a pyrophosphorylase region. UDP-N-acetyl-alpha-D-glucosamine is bound by residues 8-11 (LAAG), Lys22, Gln73, 78-79 (GT), 99-101 (YGD), Gly136, Glu151, Asn166, and Asn224. Asp101 is a binding site for Mg(2+). Residue Asn224 participates in Mg(2+) binding. Positions 227–247 (KQLAELERHYQLRAGRRLMAQ) are linker. The N-acetyltransferase stretch occupies residues 248–455 (GVTLRDPARF…WKRPEKIKKD (208 aa)). Residues Arg330 and Lys348 each contribute to the UDP-N-acetyl-alpha-D-glucosamine site. The Proton acceptor role is filled by His360. Residues Tyr363 and Asn374 each coordinate UDP-N-acetyl-alpha-D-glucosamine. Residues Ala377, 383-384 (NY), Ser402, Ala420, and Arg437 contribute to the acetyl-CoA site.

It in the N-terminal section; belongs to the N-acetylglucosamine-1-phosphate uridyltransferase family. This sequence in the C-terminal section; belongs to the transferase hexapeptide repeat family. Homotrimer. The cofactor is Mg(2+).

It is found in the cytoplasm. It catalyses the reaction alpha-D-glucosamine 1-phosphate + acetyl-CoA = N-acetyl-alpha-D-glucosamine 1-phosphate + CoA + H(+). The enzyme catalyses N-acetyl-alpha-D-glucosamine 1-phosphate + UTP + H(+) = UDP-N-acetyl-alpha-D-glucosamine + diphosphate. The protein operates within nucleotide-sugar biosynthesis; UDP-N-acetyl-alpha-D-glucosamine biosynthesis; N-acetyl-alpha-D-glucosamine 1-phosphate from alpha-D-glucosamine 6-phosphate (route II): step 2/2. It functions in the pathway nucleotide-sugar biosynthesis; UDP-N-acetyl-alpha-D-glucosamine biosynthesis; UDP-N-acetyl-alpha-D-glucosamine from N-acetyl-alpha-D-glucosamine 1-phosphate: step 1/1. Its pathway is bacterial outer membrane biogenesis; LPS lipid A biosynthesis. Its function is as follows. Catalyzes the last two sequential reactions in the de novo biosynthetic pathway for UDP-N-acetylglucosamine (UDP-GlcNAc). The C-terminal domain catalyzes the transfer of acetyl group from acetyl coenzyme A to glucosamine-1-phosphate (GlcN-1-P) to produce N-acetylglucosamine-1-phosphate (GlcNAc-1-P), which is converted into UDP-GlcNAc by the transfer of uridine 5-monophosphate (from uridine 5-triphosphate), a reaction catalyzed by the N-terminal domain. The polypeptide is Bifunctional protein GlmU (Pseudomonas fluorescens (strain ATCC BAA-477 / NRRL B-23932 / Pf-5)).